The following is a 401-amino-acid chain: Riboflavin biosynthesis protein RibBA (401 aa).

The DHBP synthase stretch occupies residues 1–203; sequence MTDFQFSKVE…IQQLQEYRRK (203 aa). D-ribulose 5-phosphate-binding positions include 30 to 31, D35, 142 to 146, and E166; these read RE and RNGHT. Residue E31 coordinates Mg(2+). H145 serves as a coordination point for Mg(2+). Residues 204 to 401 form a GTP cyclohydrolase II region; the sequence is HDSLVKQISV…QIKMGHMFNF (198 aa). 254-258 contacts GTP; it reads RIHSE. Zn(2+) is bound by residues C259, C270, and C272. GTP-binding positions include Q275, 297 to 299, and T319; that span reads EGR. D331 (proton acceptor; for GTP cyclohydrolase activity) is an active-site residue. Catalysis depends on R333, which acts as the Nucleophile; for GTP cyclohydrolase activity. Positions 354 and 359 each coordinate GTP.

This sequence in the N-terminal section; belongs to the DHBP synthase family. It in the C-terminal section; belongs to the GTP cyclohydrolase II family. The cofactor is Mg(2+). Mn(2+) is required as a cofactor. Requires Zn(2+) as cofactor.

The enzyme catalyses D-ribulose 5-phosphate = (2S)-2-hydroxy-3-oxobutyl phosphate + formate + H(+). It carries out the reaction GTP + 4 H2O = 2,5-diamino-6-hydroxy-4-(5-phosphoribosylamino)-pyrimidine + formate + 2 phosphate + 3 H(+). Its pathway is cofactor biosynthesis; riboflavin biosynthesis; 2-hydroxy-3-oxobutyl phosphate from D-ribulose 5-phosphate: step 1/1. It participates in cofactor biosynthesis; riboflavin biosynthesis; 5-amino-6-(D-ribitylamino)uracil from GTP: step 1/4. Functionally, catalyzes the conversion of D-ribulose 5-phosphate to formate and 3,4-dihydroxy-2-butanone 4-phosphate. Its function is as follows. Catalyzes the conversion of GTP to 2,5-diamino-6-ribosylamino-4(3H)-pyrimidinone 5'-phosphate (DARP), formate and pyrophosphate. This chain is Riboflavin biosynthesis protein RibBA, found in Actinobacillus pleuropneumoniae serotype 5b (strain L20).